The chain runs to 261 residues: Cytochrome c oxidase subunit 3 (261 aa).

At Met-1–Pro-15 the chain is on the mitochondrial matrix side. The helical transmembrane segment at Trp-16–Trp-34 threads the bilayer. Residues Phe-35–Thr-40 are Mitochondrial intermembrane-facing. Residues Ala-41 to Thr-66 form a helical membrane-spanning segment. The Mitochondrial matrix segment spans residues Phe-67–Thr-72. A helical transmembrane segment spans residues Pro-73–Ser-105. Residues Leu-106 to Glu-128 are Mitochondrial intermembrane-facing. Residues Val-129–Met-152 traverse the membrane as a helical segment. At Glu-153 to Asn-155 the chain is on the mitochondrial matrix side. The chain crosses the membrane as a helical span at residues Arg-156–Glu-183. The Mitochondrial intermembrane segment spans residues Ala-184–Asp-190. The chain crosses the membrane as a helical span at residues Gly-191 to Leu-223. The Mitochondrial matrix segment spans residues Lys-224–His-232. The helical transmembrane segment at Phe-233–Ile-256 threads the bilayer. Residues Tyr-257–Ser-261 are Mitochondrial intermembrane-facing.

Belongs to the cytochrome c oxidase subunit 3 family. As to quaternary structure, component of the cytochrome c oxidase (complex IV, CIV), a multisubunit enzyme composed of 14 subunits. The complex is composed of a catalytic core of 3 subunits MT-CO1, MT-CO2 and MT-CO3, encoded in the mitochondrial DNA, and 11 supernumerary subunits COX4I, COX5A, COX5B, COX6A, COX6B, COX6C, COX7A, COX7B, COX7C, COX8 and NDUFA4, which are encoded in the nuclear genome. The complex exists as a monomer or a dimer and forms supercomplexes (SCs) in the inner mitochondrial membrane with NADH-ubiquinone oxidoreductase (complex I, CI) and ubiquinol-cytochrome c oxidoreductase (cytochrome b-c1 complex, complex III, CIII), resulting in different assemblies (supercomplex SCI(1)III(2)IV(1) and megacomplex MCI(2)III(2)IV(2)).

It localises to the mitochondrion inner membrane. The catalysed reaction is 4 Fe(II)-[cytochrome c] + O2 + 8 H(+)(in) = 4 Fe(III)-[cytochrome c] + 2 H2O + 4 H(+)(out). Component of the cytochrome c oxidase, the last enzyme in the mitochondrial electron transport chain which drives oxidative phosphorylation. The respiratory chain contains 3 multisubunit complexes succinate dehydrogenase (complex II, CII), ubiquinol-cytochrome c oxidoreductase (cytochrome b-c1 complex, complex III, CIII) and cytochrome c oxidase (complex IV, CIV), that cooperate to transfer electrons derived from NADH and succinate to molecular oxygen, creating an electrochemical gradient over the inner membrane that drives transmembrane transport and the ATP synthase. Cytochrome c oxidase is the component of the respiratory chain that catalyzes the reduction of oxygen to water. Electrons originating from reduced cytochrome c in the intermembrane space (IMS) are transferred via the dinuclear copper A center (CU(A)) of subunit 2 and heme A of subunit 1 to the active site in subunit 1, a binuclear center (BNC) formed by heme A3 and copper B (CU(B)). The BNC reduces molecular oxygen to 2 water molecules using 4 electrons from cytochrome c in the IMS and 4 protons from the mitochondrial matrix. The chain is Cytochrome c oxidase subunit 3 (MT-CO3) from Syncerus caffer (African buffalo).